Consider the following 640-residue polypeptide: 1-deoxy-D-xylulose-5-phosphate synthase (640 aa).

Thiamine diphosphate contacts are provided by residues His79 and 120-122; that span reads AHS. Asp151 contributes to the Mg(2+) binding site. Thiamine diphosphate contacts are provided by residues 152–153, Asn180, Tyr289, and Glu371; that span reads GA. Asn180 is a binding site for Mg(2+).

The protein belongs to the transketolase family. DXPS subfamily. Homodimer. Requires Mg(2+) as cofactor. The cofactor is thiamine diphosphate.

The catalysed reaction is D-glyceraldehyde 3-phosphate + pyruvate + H(+) = 1-deoxy-D-xylulose 5-phosphate + CO2. It participates in metabolic intermediate biosynthesis; 1-deoxy-D-xylulose 5-phosphate biosynthesis; 1-deoxy-D-xylulose 5-phosphate from D-glyceraldehyde 3-phosphate and pyruvate: step 1/1. Catalyzes the acyloin condensation reaction between C atoms 2 and 3 of pyruvate and glyceraldehyde 3-phosphate to yield 1-deoxy-D-xylulose-5-phosphate (DXP). The sequence is that of 1-deoxy-D-xylulose-5-phosphate synthase from Novosphingobium aromaticivorans (strain ATCC 700278 / DSM 12444 / CCUG 56034 / CIP 105152 / NBRC 16084 / F199).